The primary structure comprises 320 residues: tRNA dimethylallyltransferase (320 aa).

14–21 (GPTASGKT) contacts ATP. 16-21 (TASGKT) serves as a coordination point for substrate. Interaction with substrate tRNA stretches follow at residues 39-42 (DSAL) and 163-167 (QRLQR).

This sequence belongs to the IPP transferase family. As to quaternary structure, monomer. Requires Mg(2+) as cofactor.

It carries out the reaction adenosine(37) in tRNA + dimethylallyl diphosphate = N(6)-dimethylallyladenosine(37) in tRNA + diphosphate. Functionally, catalyzes the transfer of a dimethylallyl group onto the adenine at position 37 in tRNAs that read codons beginning with uridine, leading to the formation of N6-(dimethylallyl)adenosine (i(6)A). This chain is tRNA dimethylallyltransferase, found in Thioalkalivibrio sulfidiphilus (strain HL-EbGR7).